The primary structure comprises 437 residues: Neomycin resistance protein (437 aa).

Disordered regions lie at residues 161–285 (GQRG…EEEA) and 305–338 (VSGA…PVPD). Positions 203 to 229 (PPTGARSPGATAGARATASTSSSSVRS) are enriched in low complexity. Residues 324–338 (RRRHRGRRHGRPVPD) are compositionally biased toward basic residues.

It belongs to the Gram-positive plasmids replication protein type 1 family.

In Streptomyces cyanogenus, this protein is Neomycin resistance protein.